Here is a 95-residue protein sequence, read N- to C-terminus: Co-chaperonin GroES (95 aa).

It belongs to the GroES chaperonin family. As to quaternary structure, heptamer of 7 subunits arranged in a ring. Interacts with the chaperonin GroEL.

It localises to the cytoplasm. Together with the chaperonin GroEL, plays an essential role in assisting protein folding. The GroEL-GroES system forms a nano-cage that allows encapsulation of the non-native substrate proteins and provides a physical environment optimized to promote and accelerate protein folding. GroES binds to the apical surface of the GroEL ring, thereby capping the opening of the GroEL channel. The protein is Co-chaperonin GroES of Bordetella bronchiseptica (strain ATCC BAA-588 / NCTC 13252 / RB50) (Alcaligenes bronchisepticus).